The chain runs to 479 residues: Anaerobic nitric oxide reductase flavorubredoxin (479 aa).

Residues 30 to 210 (LRGSSYNSYL…PFSRLVTPKI (181 aa)) form a zinc metallo-hydrolase region. Positions 79, 81, 83, 147, 166, and 227 each coordinate Fe cation. Positions 254 to 393 (ITIFYDTMSN…LCREHGREIA (140 aa)) constitute a Flavodoxin-like domain. FMN contacts are provided by residues 260 to 264 (TMSNN) and 342 to 369 (AFGSHGWSGGAMDRLSTRLQDAGFEMSL). Residues 423–474 (GPRMQCSVCQWIYDPAKGEPMQDVAPGTPWSEVPDNFLCPECSLGKDVFDEL) enclose the Rubredoxin-like domain. The Fe cation site is built by cysteine 428, cysteine 431, cysteine 461, and cysteine 464.

It in the N-terminal section; belongs to the zinc metallo-hydrolase group 3 family. In terms of assembly, homotetramer. The cofactor is Fe cation. It depends on FMN as a cofactor.

The protein resides in the cytoplasm. It participates in nitrogen metabolism; nitric oxide reduction. Anaerobic nitric oxide reductase; uses NADH to detoxify nitric oxide (NO), protecting several 4Fe-4S NO-sensitive enzymes. Has at least 2 reductase partners, only one of which (NorW, flavorubredoxin reductase) has been identified. NO probably binds to the di-iron center; electrons enter from the NorW at rubredoxin and are transferred sequentially to the FMN center and the di-iron center. Also able to function as an aerobic oxygen reductase. The chain is Anaerobic nitric oxide reductase flavorubredoxin from Shigella flexneri serotype 5b (strain 8401).